The chain runs to 164 residues: Peptidyl-prolyl cis-trans isomerase (164 aa).

The region spanning 7-163 is the PPIase cyclophilin-type domain; that stretch reads FFDLQANGEN…KKITIADCGQ (157 aa).

This sequence belongs to the cyclophilin-type PPIase family. PPIase A subfamily.

Its subcellular location is the cytoplasm. It carries out the reaction [protein]-peptidylproline (omega=180) = [protein]-peptidylproline (omega=0). With respect to regulation, binds cyclosporin A (CsA). CsA mediates some of its effects via an inhibitory action on PPIase. PPIases accelerate the folding of proteins. It catalyzes the cis-trans isomerization of proline imidic peptide bonds in oligopeptides. The protein is Peptidyl-prolyl cis-trans isomerase of Hemicentrotus pulcherrimus (Sea urchin).